The following is a 35-amino-acid chain: Small toxic polypeptide LdrD (35 aa).

The chain crosses the membrane as a helical span at residues 10–32; it reads FWHDLAAPVIAGILASMIVNWLN.

The protein belongs to the Ldr toxic peptide family.

Its subcellular location is the cell inner membrane. Functionally, toxic component of a type I toxin-antitoxin (TA) system. Overexpression causes rapid cell killing and nucleoid condensation of the host cell. Overexpression induces stress-response and a number of membrane protein genes. May inhibit ATP synthesis due to its insertion in the cell inner membrane. This Escherichia coli (strain K12) protein is Small toxic polypeptide LdrD (ldrD).